Here is a 213-residue protein sequence, read N- to C-terminus: uncharacterized protein (213 aa).

S-adenosyl-L-methionine contacts are provided by Gly-53, Glu-74, and Asp-97.

It belongs to the methyltransferase superfamily. YrrT family.

Its function is as follows. Could be a S-adenosyl-L-methionine-dependent methyltransferase. This is an uncharacterized protein from Bacillus subtilis (strain 168).